Consider the following 348-residue polypeptide: Maintenance of mitochondrial morphology protein 1 (348 aa).

Over 1–35 (MAGKADLGHTGISDNIVERQIFVPQPNNAWSFTQG) the chain is Lumenal. A helical membrane pass occupies residues 36 to 56 (LMCGQASVVVVLLVFIKFFVF). At 57–348 (SEAPPSSGAA…GKTEKVNGNE (292 aa)) the chain is on the cytoplasmic side. The SMP-LTD domain occupies 114–323 (NPESLDWFNV…EPKFQVVRLP (210 aa)). The disordered stretch occupies residues 328 to 348 (RSKNTREPVGAGKTEKVNGNE).

Belongs to the MMM1 family. Homodimer. Component of the ER-mitochondria encounter structure (ERMES) or MDM complex, composed of MMM1, MDM10, MDM12 and MDM34. An MMM1 homodimer associates with one molecule of MDM12 on each side in a pairwise head-to-tail manner, and the SMP-LTD domains of MMM1 and MDM12 generate a continuous hydrophobic tunnel for phospholipid trafficking.

The protein resides in the endoplasmic reticulum membrane. Its function is as follows. Component of the ERMES/MDM complex, which serves as a molecular tether to connect the endoplasmic reticulum (ER) and mitochondria. Components of this complex are involved in the control of mitochondrial shape and protein biogenesis, and function in nonvesicular lipid trafficking between the ER and mitochondria. The MDM12-MMM1 subcomplex functions in the major beta-barrel assembly pathway that is responsible for biogenesis of all outer membrane beta-barrel proteins, and acts in a late step after the SAM complex. The MDM10-MDM12-MMM1 subcomplex further acts in the TOM40-specific pathway after the action of the MDM12-MMM1 complex. Essential for establishing and maintaining the structure of mitochondria and maintenance of mtDNA nucleoids. This is Maintenance of mitochondrial morphology protein 1 from Clavispora lusitaniae (strain ATCC 42720) (Yeast).